The primary structure comprises 278 residues: Short-chain dehydrogenase/reductase eupG (278 aa).

3 residues coordinate NADP(+): L19, D71, and N98. Residue S155 is the Proton donor of the active site. NADP(+) is bound by residues Y188, K192, and T223. Residue Y188 is the Proton acceptor of the active site. Catalysis depends on K192, which acts as the Lowers pKa of active site Tyr.

Belongs to the short-chain dehydrogenases/reductases (SDR) family.

The protein operates within secondary metabolite biosynthesis; terpenoid biosynthesis. Short-chain dehydrogenase/reductase; part of the gene cluster that mediates the biosynthesis of eupenifeldin, a bistropolone meroterpenoid that acts as an antitumor agent. The first step of eupenifeldin biosynthesis is the biosynthesis of 3-methylorcinaldehyde performed by the non-reducing polyketide synthase eupA. Oxidative dearomatization of 3-methylorcinaldehyde likely catalyzed by the FAD-dependent monooxygenase eupB is followed by oxidative ring expansion by the 2-oxoglutarate-dependent dioxygenase eupC to provide the first tropolone metabolite, tropolone stipitaldehyde. In parallel, generation of sesquiterpene alpha-humulene from farnesylpyrophosphate (FPP) is catalyzed by the terpene cyclase eupE. The cytochrome P450 monooxygenase eupD then hydroxylates humulene to humulenol. The putative Diels-Alderase eupF probably catalyzes the formation of the tropolone-humulene skeleton by linking humulenol and the polyketide moiety. The short-chain dehydrogenase/reductase eupG and the flavin-dependent monooxygenase eupH are also essential for eupenifeldin biosynthesis and are likely the additional decorating enzymes of the tropolone-humulene skeleton to produce final eupenifeldin or derivatives. The sequence is that of Short-chain dehydrogenase/reductase eupG from Phoma sp.